The sequence spans 485 residues: Glutamate--tRNA ligase 1 (485 aa).

Residues 10-20 carry the 'HIGH' region motif; that stretch reads PSPTGAIHIGN. Residues 252-256 carry the 'KMSKS' region motif; sequence KLSKR. Lys255 is an ATP binding site.

This sequence belongs to the class-I aminoacyl-tRNA synthetase family. Glutamate--tRNA ligase type 1 subfamily. Monomer.

The protein resides in the cytoplasm. It catalyses the reaction tRNA(Glu) + L-glutamate + ATP = L-glutamyl-tRNA(Glu) + AMP + diphosphate. Functionally, catalyzes the attachment of glutamate to tRNA(Glu) in a two-step reaction: glutamate is first activated by ATP to form Glu-AMP and then transferred to the acceptor end of tRNA(Glu). This Thermoanaerobacter sp. (strain X514) protein is Glutamate--tRNA ligase 1.